We begin with the raw amino-acid sequence, 114 residues long: Kita-kyushu lung cancer antigen 1 homolog (114 aa).

The Cytoplasmic portion of the chain corresponds to 1 to 4 (MNVY). A helical; Signal-anchor for type II membrane protein membrane pass occupies residues 5–22 (LLLASGILCALMTVFWKY). The Extracellular portion of the chain corresponds to 23–114 (RRFQRNTGEM…RSASAHRKST (92 aa)). N84 is a glycosylation site (N-linked (GlcNAc...) asparagine).

It localises to the cell membrane. The protein is Kita-kyushu lung cancer antigen 1 homolog (CT83) of Macaca fascicularis (Crab-eating macaque).